The sequence spans 320 residues: Reticulocalbin-2 (320 aa).

The N-terminal stretch at M1–A25 is a signal peptide. EF-hand domains are found at residues E64–H99 and Y100–D135. Ca(2+) is bound by residues D77, D79, D81, E88, D113, N115, D117, T119, and E124. Position 140 is a phosphothreonine (T140). EF-hand domains lie at F150–E185, M189–A224, W230–G265, and I266–S301. Ca(2+) is bound by residues D167, E176, D202, N204, D206, E213, D243, D245, D247, R249, E254, D279, N281, D283, K285, and E290. The Prevents secretion from ER signature appears at H317–L320.

It belongs to the CREC family. Binds the snake venom phospholipase complex taipoxin. In terms of tissue distribution, ubiquitous.

The protein localises to the endoplasmic reticulum lumen. In terms of biological role, not known. Binds calcium. The protein is Reticulocalbin-2 (Rcn2) of Rattus norvegicus (Rat).